Reading from the N-terminus, the 500-residue chain is NAD(P)H-quinone oxidoreductase chain 4, chloroplastic (500 aa).

A run of 14 helical transmembrane segments spans residues 4–24 (FPWL…IFFL), 37–57 (ISIC…HFQL), 87–107 (LGSI…AWPI), 113–130 (LFYF…GLFS), 134–154 (LLLF…LLSM), 167–187 (FILY…GMGL), 211–231 (ILLY…IPLH), 242–262 (HYST…YGLI), 274–294 (YLFS…AALT), 313–333 (MGFI…GAIL), 334–354 (QILS…TASD), 386–406 (LALP…GLIT), 417–437 (LITF…LSML), and 462–482 (LFIL…PDFV).

The protein belongs to the complex I subunit 4 family.

The protein localises to the plastid. Its subcellular location is the chloroplast thylakoid membrane. The catalysed reaction is a plastoquinone + NADH + (n+1) H(+)(in) = a plastoquinol + NAD(+) + n H(+)(out). The enzyme catalyses a plastoquinone + NADPH + (n+1) H(+)(in) = a plastoquinol + NADP(+) + n H(+)(out). The chain is NAD(P)H-quinone oxidoreductase chain 4, chloroplastic (ndhD) from Hordeum vulgare (Barley).